A 170-amino-acid chain; its full sequence is Cytochrome P450 monooxygenase oryQ (170 aa).

Cys-85 contributes to the heme binding site.

It belongs to the cytochrome P450 family. It depends on heme as a cofactor.

It functions in the pathway secondary metabolite biosynthesis. In terms of biological role, cytochrome P450 monooxygenase; part of the gene cluster that mediates the biosynthesis of oryzines, natural products with an unusual maleidride backbone. The two subunits of the fungal fatty acid synthase oryfasA and oryfasB probably form octenoic acid. This fatty acid is most likely activated by the acyl-CoA ligase oryP to give octenyl-CoA before the citrate synthase-like protein oryE catalyzes condensation with oxaloacetate to form tricarboxylic acid. The next steps of the pathways are conjectural, but a favorite possible route has been proposed, beginning with decarboxylation and concomitant dehydration by the decarboxylase oryM, followed by tautomerization, which may lead to the production of a diene intermediate. Reduction of this diene intermediate could give the known metabolite piliformic acid. On the pathway to oryzine B and oryzine A, however, hydroxylation of the diene by the alpha-ketoglutarate-dependent dioxygenase oryG and lactonisation by the lactonohydrolases oryH or oryL could give oryzine B directly. Finally, enoyl reduction by the dehydrogenase oryD would then convert oryzine B into oryzine A. The protein is Cytochrome P450 monooxygenase oryQ of Aspergillus oryzae (strain ATCC 42149 / RIB 40) (Yellow koji mold).